A 446-amino-acid polypeptide reads, in one-letter code: Probable glycine dehydrogenase (decarboxylating) subunit 1 (446 aa).

Belongs to the GcvP family. N-terminal subunit subfamily. As to quaternary structure, the glycine cleavage system is composed of four proteins: P, T, L and H. In this organism, the P 'protein' is a heterodimer of two subunits.

It catalyses the reaction N(6)-[(R)-lipoyl]-L-lysyl-[glycine-cleavage complex H protein] + glycine + H(+) = N(6)-[(R)-S(8)-aminomethyldihydrolipoyl]-L-lysyl-[glycine-cleavage complex H protein] + CO2. Its function is as follows. The glycine cleavage system catalyzes the degradation of glycine. The P protein binds the alpha-amino group of glycine through its pyridoxal phosphate cofactor; CO(2) is released and the remaining methylamine moiety is then transferred to the lipoamide cofactor of the H protein. The sequence is that of Probable glycine dehydrogenase (decarboxylating) subunit 1 from Protochlamydia amoebophila (strain UWE25).